The following is a 1299-amino-acid chain: DNA-directed RNA polymerase subunit beta' (1299 aa).

C60, C62, C75, and C78 together coordinate Zn(2+). The disordered stretch occupies residues 188-209 (GAKSDQKRRAKDGAEKEMGQTR). 3 residues coordinate Mg(2+): D535, D537, and D539. Positions 882, 959, 966, and 969 each coordinate Zn(2+).

The protein belongs to the RNA polymerase beta' chain family. In terms of assembly, the RNAP catalytic core consists of 2 alpha, 1 beta, 1 beta' and 1 omega subunit. When a sigma factor is associated with the core the holoenzyme is formed, which can initiate transcription. Requires Mg(2+) as cofactor. It depends on Zn(2+) as a cofactor.

It carries out the reaction RNA(n) + a ribonucleoside 5'-triphosphate = RNA(n+1) + diphosphate. Functionally, DNA-dependent RNA polymerase catalyzes the transcription of DNA into RNA using the four ribonucleoside triphosphates as substrates. The protein is DNA-directed RNA polymerase subunit beta' of Clavibacter michiganensis subsp. michiganensis (strain NCPPB 382).